Consider the following 447-residue polypeptide: Trigger factor (447 aa).

Residues 174–261 (GDIAVLGFKG…LKDLKTRELP (88 aa)) enclose the PPIase FKBP-type domain.

The protein belongs to the FKBP-type PPIase family. Tig subfamily.

The protein resides in the cytoplasm. It catalyses the reaction [protein]-peptidylproline (omega=180) = [protein]-peptidylproline (omega=0). Involved in protein export. Acts as a chaperone by maintaining the newly synthesized protein in an open conformation. Functions as a peptidyl-prolyl cis-trans isomerase. This is Trigger factor from Synechococcus sp. (strain CC9902).